Here is a 442-residue protein sequence, read N- to C-terminus: GTPase HflX (442 aa).

Residues 186 to 362 (VLVALAGYTN…ALNRVVLKLP (177 aa)) form the Hflx-type G domain. GTP is bound by residues 192–199 (GYTNAGKS), 217–221 (FTTLD), 238–241 (DTVG), 306–309 (NKID), and 341–343 (SAR). The Mg(2+) site is built by Ser-199 and Thr-219.

Belongs to the TRAFAC class OBG-HflX-like GTPase superfamily. HflX GTPase family. In terms of assembly, monomer. Associates with the 50S ribosomal subunit. It depends on Mg(2+) as a cofactor.

The protein localises to the cytoplasm. In terms of biological role, GTPase that associates with the 50S ribosomal subunit and may have a role during protein synthesis or ribosome biogenesis. This is GTPase HflX from Thermococcus kodakarensis (strain ATCC BAA-918 / JCM 12380 / KOD1) (Pyrococcus kodakaraensis (strain KOD1)).